The primary structure comprises 1484 residues: DNA-directed RNA polymerase subunit beta' (1484 aa).

Positions 67, 69, 82, and 85 each coordinate Zn(2+). The Mg(2+) site is built by aspartate 499, aspartate 501, and aspartate 503. Cysteine 867, cysteine 943, cysteine 950, and cysteine 953 together coordinate Zn(2+).

Belongs to the RNA polymerase beta' chain family. As to quaternary structure, the RNAP catalytic core consists of 2 alpha, 1 beta, 1 beta' and 1 omega subunit. When a sigma factor is associated with the core the holoenzyme is formed, which can initiate transcription. Requires Mg(2+) as cofactor. It depends on Zn(2+) as a cofactor.

The catalysed reaction is RNA(n) + a ribonucleoside 5'-triphosphate = RNA(n+1) + diphosphate. DNA-dependent RNA polymerase catalyzes the transcription of DNA into RNA using the four ribonucleoside triphosphates as substrates. The sequence is that of DNA-directed RNA polymerase subunit beta' from Chlorobium phaeovibrioides (strain DSM 265 / 1930) (Prosthecochloris vibrioformis (strain DSM 265)).